A 298-amino-acid chain; its full sequence is MKYLLDLILLLPLLIVFSIESLVKLFIPKKKKSVAGEIVLITGAGHGIGRLTAYEFAKLNTKLVLWDINKNGIEETAAKCRKLGAQAHPFVVDCSQREEIYSAAKKVKEEVGDVSILVNNAGVVYTADLFATQDPQIEKTFEVNVLAHFWTTKAFLPVMMKNNHGHIVTVASAAGHTVVPFLLAYCSSKFAAVGFHRALTDELAALGRTGVRTSCLCPNFINTGFIKNPSTNLGPTLEPEEVVEHLMHGILTEKQMIFVPSSIALLTVLERIVPERFLQVLKHRINVKFDAVVGYKDK.

The signal sequence occupies residues 1–21 (MKYLLDLILLLPLLIVFSIES). 40 to 64 (LITGAGHGIGRLTAYEFAKLNTKLV) is a binding site for NADP(+). A substrate-binding site is contributed by serine 172. Tyrosine 185 serves as the catalytic Proton acceptor.

This sequence belongs to the short-chain dehydrogenases/reductases (SDR) family. 17-beta-HSD 3 subfamily. As to expression, expressed in the liver (at protein level). Also expressed in the intestine and, at much lower levels, in the kidney.

It localises to the endoplasmic reticulum. The protein resides in the lipid droplet. It catalyses the reaction 17beta-estradiol + NAD(+) = estrone + NADH + H(+). The enzyme catalyses 17beta-estradiol + NADP(+) = estrone + NADPH + H(+). Can convert androstan-3-alpha,17-beta-diol (3-alpha-diol) to androsterone in vitro, suggesting that it may participate in androgen metabolism during steroidogenesis. May act by metabolizing compounds that stimulate steroid synthesis and/or by generating metabolites that inhibit it. Has no activity toward DHEA (dehydroepiandrosterone), or A-dione (4-androste-3,17-dione), and only a slight activity toward testosterone to A-dione. This Mus musculus (Mouse) protein is Estradiol 17-beta-dehydrogenase 11 (Hsd17b11).